A 145-amino-acid polypeptide reads, in one-letter code: RxLR effector protein BLR40 (145 aa).

A signal peptide spans 1-22 (MLLSRAISVVALLACICCGVHT). The short motif at 44 to 58 (RRLRTSVDLVDNEER) is the RxLR-dEER element.

This sequence belongs to the RxLR effector family.

It localises to the secreted. The protein resides in the host cell membrane. In terms of biological role, secreted effector that triggers a robust hypersensitive response (HR) in Lactuca sativa cv. Design that is resistant to multiple B.lactucae races, including Bl:24. The polypeptide is RxLR effector protein BLR40 (Bremia lactucae (Lettuce downy mildew)).